The following is a 183-amino-acid chain: Dual-action ribosomal maturation protein DarP (183 aa).

Belongs to the DarP family.

It is found in the cytoplasm. Its function is as follows. Member of a network of 50S ribosomal subunit biogenesis factors which assembles along the 30S-50S interface, preventing incorrect 23S rRNA structures from forming. Promotes peptidyl transferase center (PTC) maturation. This is Dual-action ribosomal maturation protein DarP from Salmonella enteritidis PT4 (strain P125109).